Consider the following 129-residue polypeptide: Follitropin subunit beta (129 aa).

Positions 1–19 (MKSVQFCFLFCCWRAICCR) are cleaved as a signal peptide. 6 disulfides stabilise this stretch: Cys21-Cys69, Cys35-Cys84, Cys38-Cys122, Cys46-Cys100, Cys50-Cys102, and Cys105-Cys112. 2 N-linked (GlcNAc...) asparagine glycosylation sites follow: Asn25 and Asn42.

This sequence belongs to the glycoprotein hormones subunit beta family. Heterodimer. The active follitropin is a heterodimer composed of an alpha chain/CGA shared with other hormones and a unique beta chain/FSHB shown here.

Its subcellular location is the secreted. Functionally, together with the alpha chain CGA constitutes follitropin, the follicle-stimulating hormone, and provides its biological specificity to the hormone heterodimer. Binds FSHR, a G protein-coupled receptor, on target cells to activate downstream signaling pathways. Follitropin is involved in follicle development and spermatogenesis in reproductive organs. This is Follitropin subunit beta (FSHB) from Ovis aries (Sheep).